Here is a 95-residue protein sequence, read N- to C-terminus: Ribonuclease P protein component 1 (95 aa).

Belongs to the eukaryotic/archaeal RNase P protein component 1 family. In terms of assembly, consists of a catalytic RNA component and at least 4 protein subunits. Forms a subcomplex with Rnp4 which stimulates the catalytic RNA.

The protein localises to the cytoplasm. The catalysed reaction is Endonucleolytic cleavage of RNA, removing 5'-extranucleotides from tRNA precursor.. In terms of biological role, part of ribonuclease P, a protein complex that generates mature tRNA molecules by cleaving their 5'-ends. This chain is Ribonuclease P protein component 1, found in Methanocaldococcus jannaschii (strain ATCC 43067 / DSM 2661 / JAL-1 / JCM 10045 / NBRC 100440) (Methanococcus jannaschii).